Consider the following 613-residue polypeptide: Replication protein E1 (613 aa).

The segment at 1-31 (MDPNLKGITGQSFLDDQAECSESDNSEQGCE) is disordered. Acidic residues predominate over residues 16–31 (DQAECSESDNSEQGCE). The Nuclear localization signal signature appears at 71 to 73 (KRK). Ser77 and Ser92 each carry phosphoserine; by host. The interval 128-152 (YGSLASQSLSGQSQKNGKNRVNNGN) is disordered. The segment covering 129–152 (GSLASQSLSGQSQKNGKNRVNNGN) has biased composition (low complexity). The DNA-binding region stretch occupies residues 150 to 317 (NGNKENIDCT…TSITHQIQED (168 aa)). One can recognise an SF3 helicase domain in the interval 413 to 566 (YQNINFLSFL…FPLDENGKPA (154 aa)). ATP is bound at residue 442 to 449 (GPPNTGKS). The segment covering 588-597 (TEPEDEDDGD) has biased composition (acidic residues). The segment at 588-613 (TEPEDEDDGDPPSPFRCSARAAARDL) is disordered.

This sequence belongs to the papillomaviridae E1 protein family. Can form hexamers. Interacts with E2 protein; this interaction increases E1 DNA binding specificity. Interacts with host DNA polymerase subunit POLA2. Interacts with host single stranded DNA-binding protein RPA1. Interacts with host TOP1; this interaction stimulates the enzymatic activity of TOP1. Post-translationally, phosphorylated.

Its subcellular location is the host nucleus. The catalysed reaction is Couples ATP hydrolysis with the unwinding of duplex DNA by translocating in the 3'-5' direction.. The enzyme catalyses ATP + H2O = ADP + phosphate + H(+). Functionally, ATP-dependent DNA 3'-5' helicase required for initiation of viral DNA replication. It forms a complex with the viral E2 protein. The E1-E2 complex binds to the replication origin which contains binding sites for both proteins. During the initial step, a dimer of E1 interacts with a dimer of protein E2 leading to a complex that binds the viral origin of replication with high specificity. Then, a second dimer of E1 displaces the E2 dimer in an ATP-dependent manner to form the E1 tetramer. Following this, two E1 monomers are added to each half of the site, which results in the formation of two E1 trimers on the viral ori. Subsequently, two hexamers will be created. The double hexamer acts as a bi-directional helicase machinery and unwinds the viral DNA and then recruits the host DNA polymerase to start replication. This is Replication protein E1 from Bos taurus (Bovine).